The chain runs to 341 residues: Mitochondrial protein C2orf69 homolog (341 aa).

A mitochondrion-targeting transit peptide spans 1–35 (MLQVVQSPHNLVFMGSIRSVVACLSLAAVARKMTA).

The protein belongs to the C2orf69 family.

The protein resides in the mitochondrion matrix. Its function is as follows. May play a role in the respiratory chain. This Danio rerio (Zebrafish) protein is Mitochondrial protein C2orf69 homolog.